A 237-amino-acid polypeptide reads, in one-letter code: Bax inhibitor 1 (237 aa).

The Cytoplasmic segment spans residues 1-29 (MNIFDRKINFDALLKFSHITPSTQQHLKK). Residue lysine 7 forms a Glycyl lysine isopeptide (Lys-Gly) (interchain with G-Cter in ubiquitin) linkage. The helical transmembrane segment at 30 to 50 (VYASFALCMFVAAAGAYVHMV) threads the bilayer. Topologically, residues 51–52 (TH) are lumenal. Residues 53 to 73 (FIQAGLLSALGSLILMIWLMA) form a helical membrane-spanning segment. Over 74-86 (TPHSHETEQKRLG) the chain is Cytoplasmic. Residues 87-107 (LLAGFAFLTGVGLGPALEFCI) traverse the membrane as a helical segment. The Lumenal portion of the chain corresponds to 108-112 (AVNPS). The helical transmembrane segment at 113–133 (ILPTAFMGTAMIFTCFTLSAL) threads the bilayer. Residues 134–139 (YARRRS) are Cytoplasmic-facing. A helical membrane pass occupies residues 140–160 (YLFLGGILMSALSLLLLSSLG). The Lumenal segment spans residues 161-166 (NVFFGS). The chain crosses the membrane as a helical span at residues 167 to 187 (IWLFQANLYVGLVVMCGFVLF). Over 188–206 (DTQLIIEKAEHGDQDYIWH) the chain is Cytoplasmic. Residues 207–227 (CIDLFLDFITVFRKLMMILAM) constitute an intramembrane region (helical). The Cytoplasmic segment spans residues 228–237 (NEKDKKKEKK).

This sequence belongs to the BI1 family. As to quaternary structure, interacts with BCL2 and BCL2L1. Interacts with ERN1. In terms of processing, ubiquitinated by BFAR, leading to proteasomal degradation. As to expression, highly abundant in testis.

The protein localises to the endoplasmic reticulum membrane. Functionally, endoplasmic reticulum (ER)-resident protein that confers cellular protection as an anti-apoptotic protein by limiting multiple stress-inducing pathways surrounding the endoplasmic reticulum and mitochondria. Inhibits the activities of the key sensor for the endoplasmic reticulum unfolded protein response IRE1alpha/ERN1 both directly and by blocking BAX/BAK binding. Modulates ER calcium homeostasis by acting as a calcium-leak channel. Negatively regulates autophagy and autophagosome formation, especially during periods of nutrient deprivation, and reduces cell survival during starvation. This is Bax inhibitor 1 (TMBIM6) from Homo sapiens (Human).